The chain runs to 288 residues: Fibroblast growth factor 2 (288 aa).

Residues 1–142 constitute a propeptide that is removed on maturation; the sequence is MVGVGGGDVE…TMAAGSITTL (142 aa). Positions 1 to 156 are disordered; that stretch reads MVGVGGGDVE…EDGGSGAFPP (156 aa). Basic and acidic residues predominate over residues 72 to 84; sequence ERPSGSRLGDHGR. Arginine 108, arginine 110, and arginine 112 each carry omega-N-methylarginine; alternate. Symmetric dimethylarginine; alternate is present on residues arginine 108, arginine 110, and arginine 112. Residues 113–132 are compositionally biased toward low complexity; sequence GTAAPRAAPAARGSRPGPAG. Asparagine 169 provides a ligand contact to heparin. Positions 179–181 match the Cell attachment site; atypical motif; the sequence is DGR. Tyrosine 215 carries the post-translational modification Phosphotyrosine; by TEC. The short motif at 221–223 is the Cell attachment site; atypical element; sequence DGR. A Glycyl lysine isopeptide (Lys-Gly) (interchain with G-Cter in SUMO1) cross-link involves residue lysine 228. Residues 261-277 form a heparin-binding region; that stretch reads KRTGQYKLGSKTGPGQK.

It belongs to the heparin-binding growth factors family. In terms of assembly, monomer. Homodimer. Interacts with FGFR1, FGFR2, FGFR3 and FGFR4. Affinity between fibroblast growth factors (FGFs) and their receptors is increased by heparan sulfate glycosaminoglycans that function as coreceptors. Interacts with CSPG4, FGFBP1 and TEC. Found in a complex with FGFBP1, FGF1 and FGF2. Interacts with FGFBP3. Interacts with integrin ITGAV:ITGB3; the interaction is required for FGF2 signaling. Interacts with SNORC (via the extracellular domain). Interacts with glypican GPC3. Phosphorylation at Tyr-215 regulates FGF2 unconventional secretion.

The protein resides in the secreted. It localises to the nucleus. Functionally, acts as a ligand for FGFR1, FGFR2, FGFR3 and FGFR4. Also acts as an integrin ligand which is required for FGF2 signaling. Binds to integrin ITGAV:ITGB3. Plays an important role in the regulation of cell survival, cell division, cell differentiation and cell migration. Functions as a potent mitogen in vitro. Can induce angiogenesis. Mediates phosphorylation of ERK1/2 and thereby promotes retinal lens fiber differentiation. The polypeptide is Fibroblast growth factor 2 (Pan troglodytes (Chimpanzee)).